Reading from the N-terminus, the 444-residue chain is Chitinase-like protein Idgf5 (444 aa).

The first 26 residues, 1-26 (MMWIQKNPFLGLLLCSFLAFFQSTYA), serve as a signal peptide directing secretion. The GH18 domain occupies 29 to 444 (GKLVCFYDAQ…PILRSIKFKL (416 aa)). C33 and C60 are joined by a disulfide. N-linked (GlcNAc...) asparagine glycosylation is found at N289 and N311. An intrachain disulfide couples C349 to C429.

Belongs to the glycosyl hydrolase 18 family. IDGF subfamily. In terms of processing, glycosylated.

The protein resides in the secreted. Functionally, probably required to stimulate the proliferation, polarization and motility of imaginal disk cells. May act by stabilizing the binding of insulin-like peptides to its receptor through a simultaneous interaction with both molecules to form a multiprotein signaling complex. The polypeptide is Chitinase-like protein Idgf5 (Idgf5) (Drosophila melanogaster (Fruit fly)).